Reading from the N-terminus, the 529-residue chain is UDP-glucuronosyltransferase 2B7 (529 aa).

The signal sequence occupies residues 1 to 23 (MSVKWTSVILLIQLSFCFSSGNC). N-linked (GlcNAc...) asparagine glycosylation is found at asparagine 67, asparagine 68, and asparagine 315. UDP-alpha-D-glucuronate contacts are provided by residues 373-379 (THGGANG) and aspartate 398. The chain crosses the membrane as a helical span at residues 493-509 (VIGFLLVCVATVIFIVT).

Belongs to the UDP-glycosyltransferase family.

The protein resides in the endoplasmic reticulum membrane. The catalysed reaction is glucuronate acceptor + UDP-alpha-D-glucuronate = acceptor beta-D-glucuronoside + UDP + H(+). It carries out the reaction 17alpha-estradiol + UDP-alpha-D-glucuronate = 17alpha-estradiol 17-O-(beta-D-glucuronate) + UDP + H(+). The enzyme catalyses 17beta-estradiol + UDP-alpha-D-glucuronate = 17beta-estradiol 17-O-(beta-D-glucuronate) + UDP + H(+). It catalyses the reaction 2-hydroxy-17beta-estradiol + UDP-alpha-D-glucuronate = 2-hydroxy-17beta-estradiol 3-O-(beta-D-glucuronate) + UDP + H(+). The catalysed reaction is 4-hydroxy-17beta-estradiol + UDP-alpha-D-glucuronate = 17beta-estradiol 4-O-(beta-D-glucuronate) + UDP + H(+). It carries out the reaction 4-hydroxyestrone + UDP-alpha-D-glucuronate = estrone 4-O-(beta-D-glucuronate) + UDP + H(+). The enzyme catalyses 16alpha-hydroxyestrone + UDP-alpha-D-glucuronate = 16alpha-hydroxyestrone 16-O-(beta-D-glucuronate) + UDP + H(+). It catalyses the reaction 16alpha,17beta-estriol + UDP-alpha-D-glucuronate = 16alpha,17beta-estriol 16-O-(beta-D-glucuronate) + UDP + H(+). The catalysed reaction is 16beta,17beta-estriol + UDP-alpha-D-glucuronate = 16beta,17beta-estriol 16-O-(beta-D-glucuronate) + UDP + H(+). It carries out the reaction 16alpha,17alpha-estriol + UDP-alpha-D-glucuronate = 16alpha,17alpha-estriol 16-O-(beta-D-glucuronate) + UDP + H(+). The enzyme catalyses 16alpha,17alpha-estriol + UDP-alpha-D-glucuronate = 16alpha,17alpha-estriol 17-O-(beta-D-glucuronate) + UDP + H(+). It catalyses the reaction epitestosterone + UDP-alpha-D-glucuronate = epitestosterone 17-O-(beta-D-glucuronate) + UDP + H(+). The catalysed reaction is hyodeoxycholate + UDP-alpha-D-glucuronate = hyodeoxycholate 6-O-(beta-D-glucuronate) + UDP + H(+). It carries out the reaction hyocholate + UDP-alpha-D-glucuronate = hyocholate 6-O-(beta-D-glucuronate) + UDP + H(+). The enzyme catalyses all-trans-retinoate + UDP-alpha-D-glucuronate = all-trans-retinoyl-1-O-(beta-D-glucuronate) + UDP. It catalyses the reaction all-trans-4-hydroxyretinoate + UDP-alpha-D-glucuronate = all-trans-4-hydroxy-4-O-(beta-D-glucuronide)-retinoate + UDP + H(+). The catalysed reaction is (E)-ferulate + UDP-alpha-D-glucuronate = (E)-ferulic acid beta-D-glucuronate ester + UDP. It carries out the reaction 8-iso-prostaglandin F2alpha + UDP-alpha-D-glucuronate = 8-iso-prostaglandin F2alpha-glucuronide + UDP + H(+). The enzyme catalyses 5-epi-5-F2t-IsoP + UDP-alpha-D-glucuronate = 5-epi-5-F2t-IsoP-glucuronide + UDP + H(+). It catalyses the reaction (5Z,8Z,11Z,14Z)-eicosatetraenoate + UDP-alpha-D-glucuronate = O-[(5Z),(8Z),(11Z),(14Z)-eicosatetraenoyl]-beta-D-glucuronate + UDP. The catalysed reaction is 15-hydroxy-(5Z,8Z,11Z,13E)-eicosatetraenoate + UDP-alpha-D-glucuronate = 15-O-(beta-D-glucuronosyl)-(5Z,8Z,11Z,14Z)-eicosatetraenoate + UDP + H(+). It carries out the reaction 20-hydroxy-(5Z,8Z,11Z,14Z)-eicosatetraenoate + UDP-alpha-D-glucuronate = 20-O-(beta-D-glucuronosyl)-(5Z,8Z,11Z,14Z)-eicosatetraenoate + UDP + H(+). The enzyme catalyses (E)-ferulate + UDP-alpha-D-glucuronate = (E)-4-O-(beta-D-glucuronosyl)-ferulate + UDP + H(+). It catalyses the reaction prostaglandin B1 + UDP-alpha-D-glucuronate = 15-O-(beta-D-glucuronosyl)-prostaglandin B1 + UDP + H(+). The catalysed reaction is mycophenolate + UDP-alpha-D-glucuronate = mycophenolic acid O-acyl-beta-D-glucuronide + UDP. It carries out the reaction losartan + UDP-alpha-D-glucuronate = losartan-2-N-beta-D-glucuronide + UDP. The enzyme catalyses candesartan + UDP-alpha-D-glucuronate = candesartan O-beta-D-glucuronoside + UDP. It catalyses the reaction candesartan + UDP-alpha-D-glucuronate = candesartan-2-N-beta-D-glucuronide + UDP. The catalysed reaction is zolasartan + UDP-alpha-D-glucuronate = zolarsartan O-beta-D-glucuronoside + UDP. Its function is as follows. UDP-glucuronosyltransferase (UGT) that catalyzes phase II biotransformation reactions in which lipophilic substrates are conjugated with glucuronic acid to increase the metabolite's water solubility, thereby facilitating excretion into either the urine or bile. Essential for the elimination and detoxification of drugs, xenobiotics and endogenous compounds. Catalyzes the glucuronidation of endogenous steroid hormones such as androgens (epitestosterone, androsterone) and estrogens (estradiol, epiestradiol, estriol, catechol estrogens). Also regulates the levels of retinoic acid, a major metabolite of vitamin A involved in apoptosis, cellular growth and differentiation, and embryonic development. Contributes to bile acid (BA) detoxification by catalyzing the glucuronidation of BA substrates, which are natural detergents for dietary lipids absorption. Involved in the glucuronidation of arachidonic acid (AA) and AA-derived eicosanoids including 15-HETE, 20-HETE, PGE2, PGB1 and F2-isoprostanes (8-iso-PGF2alpha and 5-epi-5-F2t-IsoP). Involved in the glucuronidation of the phytochemical ferulic acid at the phenolic or the carboxylic acid group. Involved in the glucuronidation of the AGTR1 angiotensin receptor antagonist losartan, caderastan and zolarsatan, drugs which can inhibit the effect of angiotensin II. Also metabolizes mycophenolate, an immunosuppressive agent. This is UDP-glucuronosyltransferase 2B7 from Homo sapiens (Human).